The following is a 300-amino-acid chain: Bifunctional protein FolD (300 aa).

Residues 168–170 (GRS), Ser-193, and Ile-234 contribute to the NADP(+) site.

This sequence belongs to the tetrahydrofolate dehydrogenase/cyclohydrolase family. As to quaternary structure, homodimer.

The catalysed reaction is (6R)-5,10-methylene-5,6,7,8-tetrahydrofolate + NADP(+) = (6R)-5,10-methenyltetrahydrofolate + NADPH. The enzyme catalyses (6R)-5,10-methenyltetrahydrofolate + H2O = (6R)-10-formyltetrahydrofolate + H(+). Its pathway is one-carbon metabolism; tetrahydrofolate interconversion. Its function is as follows. Catalyzes the oxidation of 5,10-methylenetetrahydrofolate to 5,10-methenyltetrahydrofolate and then the hydrolysis of 5,10-methenyltetrahydrofolate to 10-formyltetrahydrofolate. This chain is Bifunctional protein FolD, found in Ehrlichia ruminantium (strain Welgevonden).